A 237-amino-acid chain; its full sequence is Class B acid phosphatase (237 aa).

The signal sequence occupies residues 1-23 (MKKITLALSAVCLLFTLNHSANA). The active-site Nucleophile is the aspartate 69. Residues aspartate 69 and aspartate 71 each coordinate Mg(2+). Aspartate 71 serves as the catalytic Proton donor. Residues 137-138 (TG) and lysine 177 contribute to the substrate site. Aspartate 192 is a Mg(2+) binding site.

It belongs to the class B bacterial acid phosphatase family. Homotetramer. Requires Mg(2+) as cofactor.

The protein resides in the periplasm. It carries out the reaction a phosphate monoester + H2O = an alcohol + phosphate. Nucleosides, and particularly 2'-deoxyribonucleosides, are potent inhibitors of the phosphatase activity. The phosphatase activity is also inhibited by inorganic phosphate and EDTA in vitro. Dephosphorylates several organic phosphate monoesters such as 3'-UMP, 5'-UMP and pNPP. Also has a phosphotransferase activity catalyzing the transfer of low-energy phosphate groups from organic phosphate monoesters to free hydroxyl groups of various organic compounds such as the 2'-, 3-, or 5'-hydroxyls of nucleosides and nucleotides. Also displays significant phosphomutase activity since it is able to catalyze the transfer of the phosphate group of 3'-AMP from the 3'-position both to the 2'- and 5'-positions. One of the physiological functions of the phosphohydrolytic activity of the enzyme is believed to be the scavenging of organic phosphate esters that otherwise cannot pass the cytoplasmic membrane. This Salmonella typhimurium (strain LT2 / SGSC1412 / ATCC 700720) protein is Class B acid phosphatase (aphA).